Reading from the N-terminus, the 143-residue chain is Transcriptional regulator MraZ (143 aa).

SpoVT-AbrB domains follow at residues 5–47 (EYKH…SLKE) and 76–119 (ACEC…SENN).

The protein belongs to the MraZ family. Forms oligomers.

The protein resides in the cytoplasm. Its subcellular location is the nucleoid. This chain is Transcriptional regulator MraZ, found in Caldicellulosiruptor bescii (strain ATCC BAA-1888 / DSM 6725 / KCTC 15123 / Z-1320) (Anaerocellum thermophilum).